The following is a 237-amino-acid chain: Thiamine-phosphate synthase (237 aa).

4-amino-2-methyl-5-(diphosphooxymethyl)pyrimidine-binding positions include 41–45 (QLRDK) and Asn-73. Positions 74 and 93 each coordinate Mg(2+). Ser-112 contributes to the 4-amino-2-methyl-5-(diphosphooxymethyl)pyrimidine binding site. 143 to 145 (TPT) provides a ligand contact to 2-[(2R,5Z)-2-carboxy-4-methylthiazol-5(2H)-ylidene]ethyl phosphate. Lys-146 serves as a coordination point for 4-amino-2-methyl-5-(diphosphooxymethyl)pyrimidine. Gly-192 serves as a coordination point for 2-[(2R,5Z)-2-carboxy-4-methylthiazol-5(2H)-ylidene]ethyl phosphate.

It belongs to the thiamine-phosphate synthase family. Mg(2+) serves as cofactor.

The enzyme catalyses 2-[(2R,5Z)-2-carboxy-4-methylthiazol-5(2H)-ylidene]ethyl phosphate + 4-amino-2-methyl-5-(diphosphooxymethyl)pyrimidine + 2 H(+) = thiamine phosphate + CO2 + diphosphate. It catalyses the reaction 2-(2-carboxy-4-methylthiazol-5-yl)ethyl phosphate + 4-amino-2-methyl-5-(diphosphooxymethyl)pyrimidine + 2 H(+) = thiamine phosphate + CO2 + diphosphate. It carries out the reaction 4-methyl-5-(2-phosphooxyethyl)-thiazole + 4-amino-2-methyl-5-(diphosphooxymethyl)pyrimidine + H(+) = thiamine phosphate + diphosphate. It functions in the pathway cofactor biosynthesis; thiamine diphosphate biosynthesis; thiamine phosphate from 4-amino-2-methyl-5-diphosphomethylpyrimidine and 4-methyl-5-(2-phosphoethyl)-thiazole: step 1/1. Functionally, condenses 4-methyl-5-(beta-hydroxyethyl)thiazole monophosphate (THZ-P) and 2-methyl-4-amino-5-hydroxymethyl pyrimidine pyrophosphate (HMP-PP) to form thiamine monophosphate (TMP). The chain is Thiamine-phosphate synthase from Arthrobacter sp. (strain FB24).